The sequence spans 599 residues: Sulfite reductase [NADPH] flavoprotein alpha-component (599 aa).

Residues 64–202 enclose the Flavodoxin-like domain; the sequence is ITIISASQTG…AASEWRARVV (139 aa). FMN is bound by residues 70 to 75, 117 to 120, and 153 to 162; these read SQTGNA, STQG, and LGDSSYEFFC. Residues 234-448 form the FAD-binding FR-type domain; it reads DAPLAASLSV…IEHNDNFRLP (215 aa). FAD is bound by residues threonine 322, alanine 356, 386–389, 404–406, tyrosine 410, and 419–422; these read RLYS, TVG, and GGAS. NADP(+)-binding positions include 519 to 520, 525 to 529, and aspartate 561; these read SR and KIYVQ. Tyrosine 599 contacts FAD.

It belongs to the NADPH-dependent sulphite reductase flavoprotein subunit CysJ family. The protein in the N-terminal section; belongs to the flavodoxin family. In the C-terminal section; belongs to the flavoprotein pyridine nucleotide cytochrome reductase family. Alpha(8)-beta(8). The alpha component is a flavoprotein, the beta component is a hemoprotein. FAD serves as cofactor. Requires FMN as cofactor.

It carries out the reaction hydrogen sulfide + 3 NADP(+) + 3 H2O = sulfite + 3 NADPH + 4 H(+). Its pathway is sulfur metabolism; hydrogen sulfide biosynthesis; hydrogen sulfide from sulfite (NADPH route): step 1/1. Functionally, component of the sulfite reductase complex that catalyzes the 6-electron reduction of sulfite to sulfide. This is one of several activities required for the biosynthesis of L-cysteine from sulfate. The flavoprotein component catalyzes the electron flow from NADPH -&gt; FAD -&gt; FMN to the hemoprotein component. The chain is Sulfite reductase [NADPH] flavoprotein alpha-component from Escherichia coli O6:H1 (strain CFT073 / ATCC 700928 / UPEC).